Here is a 99-residue protein sequence, read N- to C-terminus: Transcriptional repressor PagR (99 aa).

An HTH arsR-type domain is found at 9–99 (IEYMSLEDDA…GIIKLLNPIQ (91 aa)). Positions 43–62 (NVTQIIQILKLPQSTVSQHL) form a DNA-binding region, H-T-H motif.

Its function is as follows. Represses the expression of the pagA and atxA genes. This chain is Transcriptional repressor PagR (pagR), found in Bacillus anthracis.